A 238-amino-acid chain; its full sequence is Ribonuclease PH (238 aa).

Phosphate is bound by residues Arg86 and 124 to 126 (GTR).

The protein belongs to the RNase PH family. As to quaternary structure, homohexameric ring arranged as a trimer of dimers.

The enzyme catalyses tRNA(n+1) + phosphate = tRNA(n) + a ribonucleoside 5'-diphosphate. Its function is as follows. Phosphorolytic 3'-5' exoribonuclease that plays an important role in tRNA 3'-end maturation. Removes nucleotide residues following the 3'-CCA terminus of tRNAs; can also add nucleotides to the ends of RNA molecules by using nucleoside diphosphates as substrates, but this may not be physiologically important. Probably plays a role in initiation of 16S rRNA degradation (leading to ribosome degradation) during starvation. This Sphingopyxis alaskensis (strain DSM 13593 / LMG 18877 / RB2256) (Sphingomonas alaskensis) protein is Ribonuclease PH.